Consider the following 328-residue polypeptide: Small neutral protease regulatory protein (328 aa).

Positions methionine 1–threonine 60 constitute an HTH lysR-type domain. Residues leucine 20–threonine 39 constitute a DNA-binding region (H-T-H motif).

This sequence belongs to the LysR transcriptional regulatory family.

Transcriptional trans-activator of the gene (mprA) for the small neutral protease. The protein is Small neutral protease regulatory protein (mprR) of Streptomyces coelicolor (strain ATCC BAA-471 / A3(2) / M145).